The sequence spans 243 residues: Pyridoxine 5'-phosphate synthase (243 aa).

A 3-amino-2-oxopropyl phosphate-binding site is contributed by Asn9. 11–12 (DH) provides a ligand contact to 1-deoxy-D-xylulose 5-phosphate. Residue Arg20 participates in 3-amino-2-oxopropyl phosphate binding. His45 acts as the Proton acceptor in catalysis. Arg47 and His52 together coordinate 1-deoxy-D-xylulose 5-phosphate. Glu72 (proton acceptor) is an active-site residue. Thr102 is a 1-deoxy-D-xylulose 5-phosphate binding site. His193 functions as the Proton donor in the catalytic mechanism. Residues Gly194 and 215–216 (GH) contribute to the 3-amino-2-oxopropyl phosphate site.

The protein belongs to the PNP synthase family. In terms of assembly, homooctamer; tetramer of dimers.

Its subcellular location is the cytoplasm. The catalysed reaction is 3-amino-2-oxopropyl phosphate + 1-deoxy-D-xylulose 5-phosphate = pyridoxine 5'-phosphate + phosphate + 2 H2O + H(+). It functions in the pathway cofactor biosynthesis; pyridoxine 5'-phosphate biosynthesis; pyridoxine 5'-phosphate from D-erythrose 4-phosphate: step 5/5. Catalyzes the complicated ring closure reaction between the two acyclic compounds 1-deoxy-D-xylulose-5-phosphate (DXP) and 3-amino-2-oxopropyl phosphate (1-amino-acetone-3-phosphate or AAP) to form pyridoxine 5'-phosphate (PNP) and inorganic phosphate. In Salmonella typhi, this protein is Pyridoxine 5'-phosphate synthase.